The sequence spans 551 residues: MKLYDNGVAVLGCGNLGNAIAKGLVASKQFKSNQIVLTKRNLSTIEPLKREGYHVTTSNHDAVSRCKIVIVCVVPAQLDDLLDSIKQSVTENHIIISVVSGASIEDIRSHLEKDVPIVRAMPNTAIQHCQSMTCLAIRSSHQKSTNSPSDKAKDNALEVAKKIFNCLGMSIVLSEEQIVPATALCACGIAFFCRAIRAAAQGGCEIGFHAEDAIRIAAQTAKGAATLLLENNFHPEYEIDKVTTPQGCTIAGLNQMEHAGFSSAMIKGIVTSSDKAASLYTQKQQNKKQQQLKQQQHQQHQHQQHQQHQQQVQQQEPHQYQQQQQQSHQQSQYNQGHNYGHQNQHHHNHDDQHQNYYNQDQKRRNNRKHRSNENYDNHHHHNQQYQQHQQPTQQESQEQTQQPEQTQSTNQSNQRRNSESRNGKSPQKQPQKQSQVQQPSSTTENTDQQQQQQPPQEQQQQQEQPQQPQEQQQQPNVVDEAERPKEQQQQPQQQQQTIDKKGYNNNRRGGRHYSYNNNYNSHHHRHNGINKNSSSMYHDEKRHEVKTEQIN.

The segment at 279-551 (LYTQKQQNKK…RHEVKTEQIN (273 aa)) is disordered. Low complexity-rich tracts occupy residues 282-298 (QKQQ…QQHQ), 306-342 (QQHQ…YGHQ), 383-415 (QQYQ…SNQR), 424-441 (KSPQ…QPSS), 448-475 (QQQQ…QQQP), 487-496 (QQQQPQQQQQ), and 503-520 (YNNN…NNYN). The span at 537–551 (YHDEKRHEVKTEQIN) shows a compositional bias: basic and acidic residues.

The protein belongs to the pyrroline-5-carboxylate reductase family. Homodecamer; composed of 5 homodimers.

It carries out the reaction L-proline + NADP(+) = (S)-1-pyrroline-5-carboxylate + NADPH + 2 H(+). It catalyses the reaction L-proline + NAD(+) = (S)-1-pyrroline-5-carboxylate + NADH + 2 H(+). It functions in the pathway amino-acid biosynthesis; L-proline biosynthesis; L-proline from L-glutamate 5-semialdehyde: step 1/1. The protein is Pyrroline-5-carboxylate reductase 1 (pycr1) of Dictyostelium discoideum (Social amoeba).